A 449-amino-acid polypeptide reads, in one-letter code: Myb family transcription factor PHL6 (449 aa).

The segment at 49-72 (PFIRSQSPDSPGQLWPKNSSQSTF) is disordered. The HTH myb-type domain occupies 238–298 (ANQKSRMRWT…HLQKYRLAKY (61 aa)). The segment at residues 269–294 (PKAVKKLMNVEGLTIYHVKSHLQKYR) is a DNA-binding region (H-T-H motif). The segment at 301-327 (EKKEEKRTDNSEEKKLALSKSEADEKK) is disordered. Positions 334–354 (TEALRMQMEVQKQLHEQLEVQ) are coiled coil. The LHEQLE motif lies at 347 to 352 (LHEQLE). The interval 376–449 (RKTGRWISSS…NIAESEDPKR (74 aa)) is disordered. Positions 381-410 (WISSSSQTVLSPSDDSIPDSQNMSKTKASS) are enriched in polar residues.

It belongs to the MYB-CC family.

Its subcellular location is the nucleus. The chain is Myb family transcription factor PHL6 from Arabidopsis thaliana (Mouse-ear cress).